Consider the following 354-residue polypeptide: RH-like protein (354 aa).

A run of 8 helical transmembrane segments spans residues Gly-11–Phe-31, Val-45–Leu-65, Val-77–Phe-97, Ile-125–Val-145, Val-167–Leu-187, Ala-209–Thr-229, Val-238–Leu-258, and Leu-287–Gly-307.

The protein belongs to the ammonium transporter (TC 2.A.49) family. Rh subfamily.

It localises to the membrane. Functionally, may be part of an oligomeric complex which is likely to have a transport or channel function in the erythrocyte membrane. In Hylobates pileatus (Pileated gibbon), this protein is RH-like protein.